The chain runs to 381 residues: Protein palisade (381 aa).

The first 25 residues, 1–25 (MMMHSRNRSWTLTLLALGVVLATSA), serve as a signal peptide directing secretion. A run of 6 repeats spans residues 190–199 (PAAPAYEAPA), 200–209 (PPAPAYEAPA), 210–219 (PPAPAYEAPA), 220–229 (PAAPAYEAPA), 230–239 (PAAPAYEAPT), and 247–256 (PPAPAYEPPA). A 6 X 10 AA approximate tandem repeats of P-[AP]-A-P-A-Y-E-[AP]-P-[AT] region spans residues 190-256 (PAAPAYEAPA…PPAPAYEPPA (67 aa)). Disordered stretches follow at residues 236 to 270 (EAPT…AQPS) and 309 to 329 (TPTA…PSQN). Residues 311 to 321 (TAPPPPPPPAP) are compositionally biased toward pro residues.

In terms of processing, sulfated by pip; may be involved in embryo dorsal-ventral axis determination. Sulfation by pip may occur on covalently bound glycosaminoglycans. May undergo both disulfide and non-disulfide cross-linking upon incorporation into the vitelline membrane. In terms of tissue distribution, present in the perivitelline space of stage 10 egg chambers and in the vitelline membrane adjacent to the oocyte in stage 13 and 14 egg chambers (at protein level).

The protein resides in the secreted. It is found in the extracellular space. Its subcellular location is the extracellular matrix. Minor protein component of the vitelline membrane. Involved in vitelline membrane biogenesis during late stages of oogenesis. Required for efficient disulfide and non-disulfide cross-linking of several vitelline membrane components. This Drosophila melanogaster (Fruit fly) protein is Protein palisade.